Here is a 341-residue protein sequence, read N- to C-terminus: UDP-N-acetylenolpyruvoylglucosamine reductase (341 aa).

Positions 15–185 constitute an FAD-binding PCMH-type domain; the sequence is LAQSCADLVE…TAVGLRLVKR (171 aa). Arg161 is an active-site residue. Ser231 serves as the catalytic Proton donor. Glu327 is a catalytic residue.

Belongs to the MurB family. FAD serves as cofactor.

Its subcellular location is the cytoplasm. The catalysed reaction is UDP-N-acetyl-alpha-D-muramate + NADP(+) = UDP-N-acetyl-3-O-(1-carboxyvinyl)-alpha-D-glucosamine + NADPH + H(+). It functions in the pathway cell wall biogenesis; peptidoglycan biosynthesis. Functionally, cell wall formation. The protein is UDP-N-acetylenolpyruvoylglucosamine reductase of Shewanella baltica (strain OS195).